We begin with the raw amino-acid sequence, 88 residues long: Insertion element ISR1 uncharacterized 10 kDa protein A3 (88 aa).

The protein belongs to the transposase 8 family.

This is Insertion element ISR1 uncharacterized 10 kDa protein A3 from Rhizobium sp.